A 1411-amino-acid chain; its full sequence is DNA-directed RNA polymerase subunit beta' (1411 aa).

The Zn(2+) site is built by C69, C71, C84, and C87. 3 residues coordinate Mg(2+): D461, D463, and D465. Residues C809, C883, C890, and C893 each coordinate Zn(2+).

The protein belongs to the RNA polymerase beta' chain family. In terms of assembly, the RNAP catalytic core consists of 2 alpha, 1 beta, 1 beta' and 1 omega subunit. When a sigma factor is associated with the core the holoenzyme is formed, which can initiate transcription. Mg(2+) serves as cofactor. Zn(2+) is required as a cofactor.

The catalysed reaction is RNA(n) + a ribonucleoside 5'-triphosphate = RNA(n+1) + diphosphate. Its function is as follows. DNA-dependent RNA polymerase catalyzes the transcription of DNA into RNA using the four ribonucleoside triphosphates as substrates. The sequence is that of DNA-directed RNA polymerase subunit beta' from Ehrlichia ruminantium (strain Welgevonden).